A 460-amino-acid polypeptide reads, in one-letter code: A-type ATP synthase subunit B (460 aa).

The protein belongs to the ATPase alpha/beta chains family. In terms of assembly, has multiple subunits, A(3), B(3), C, D, E, F, G, I and K(x); there may be a few other subunits as well.

It is found in the cell membrane. Its function is as follows. Component of the A-type ATP synthase that produces ATP from ADP in the presence of a proton gradient across the membrane. The B chain is a regulatory subunit. The protein is A-type ATP synthase subunit B of Methanosarcina mazei (strain ATCC BAA-159 / DSM 3647 / Goe1 / Go1 / JCM 11833 / OCM 88) (Methanosarcina frisia).